Consider the following 455-residue polypeptide: Vimentin (455 aa).

The tract at residues 1 to 87 (MASRTNTSSY…GLADAINTEF (87 aa)) is head. Positions 87-122 (FKTNRTNEKAEMQHLNDRFASYIDKVRFLEQQNKIL) form a coiled coil. Residues 88–122 (KTNRTNEKAEMQHLNDRFASYIDKVRFLEQQNKIL) form a coil 1A region. Positions 94–402 (EKAEMQHLND…KLLEGEESRI (309 aa)) constitute an IF rod domain. Positions 123–144 (IAELEQMRGKGSSRVGDLYQDE) are linker 1. Positions 145-236 (MRELRRQVDQ…KLHDEELAEL (92 aa)) form a coiled coil. The tract at residues 145–236 (MRELRRQVDQ…KLHDEELAEL (92 aa)) is coil 1B. The linker 12 stretch occupies residues 237-259 (QIQIQEQHVQIDMEVAKPDLTAA). Residues 260 to 398 (LKDVRQQYET…ATYRKLLEGE (139 aa)) form a coil 2 region. Residues 294-398 (ARNNEAIRLA…ATYRKLLEGE (105 aa)) are a coiled coil. The tract at residues 399 to 455 (ESRITTPFPNLSSLTLRETMKETRPAMDSLSKKVVIKTIETRDGHIINESSQNDDLE) is tail.

Belongs to the intermediate filament family. In terms of assembly, homomer assembled from elementary dimers. Post-translationally, one of the most prominent phosphoproteins in various cells of mesenchymal origin. Phosphorylation is enhanced during cell division, at which time vimentin filaments are significantly reorganized.

It is found in the cytoplasm. Its subcellular location is the cytoskeleton. It localises to the nucleus matrix. In terms of biological role, vimentins are class-III intermediate filaments found in various non-epithelial cells, especially mesenchymal cells. Vimentin is attached to the nucleus, endoplasmic reticulum, and mitochondria, either laterally or terminally. This Cyprinus carpio (Common carp) protein is Vimentin (vim).